A 64-amino-acid polypeptide reads, in one-letter code: Large ribosomal subunit protein bL35 (64 aa).

This sequence belongs to the bacterial ribosomal protein bL35 family.

In Alcanivorax borkumensis (strain ATCC 700651 / DSM 11573 / NCIMB 13689 / SK2), this protein is Large ribosomal subunit protein bL35.